Reading from the N-terminus, the 811-residue chain is Leucine--tRNA ligase (811 aa).

The short motif at 40-50 (PYPSGRLHMGH) is the 'HIGH' region element. The short motif at 579–583 (KMSKS) is the 'KMSKS' region element. Residue lysine 582 coordinates ATP.

It belongs to the class-I aminoacyl-tRNA synthetase family.

Its subcellular location is the cytoplasm. The enzyme catalyses tRNA(Leu) + L-leucine + ATP = L-leucyl-tRNA(Leu) + AMP + diphosphate. The chain is Leucine--tRNA ligase from Campylobacter fetus subsp. fetus (strain 82-40).